Consider the following 652-residue polypeptide: Threonine--tRNA ligase (652 aa).

The region spanning Met1–Thr64 is the TGS domain. The interval Asp245–Pro542 is catalytic. The Zn(2+) site is built by Cys338, His389, and His519.

It belongs to the class-II aminoacyl-tRNA synthetase family. As to quaternary structure, homodimer. Requires Zn(2+) as cofactor.

The protein localises to the cytoplasm. It carries out the reaction tRNA(Thr) + L-threonine + ATP = L-threonyl-tRNA(Thr) + AMP + diphosphate + H(+). Its function is as follows. Catalyzes the attachment of threonine to tRNA(Thr) in a two-step reaction: L-threonine is first activated by ATP to form Thr-AMP and then transferred to the acceptor end of tRNA(Thr). Also edits incorrectly charged L-seryl-tRNA(Thr). This chain is Threonine--tRNA ligase, found in Geobacillus kaustophilus (strain HTA426).